We begin with the raw amino-acid sequence, 338 residues long: tRNA N6-adenosine threonylcarbamoyltransferase (338 aa).

Fe cation is bound by residues His110 and His114. Residues 132–136 (VLSGG), Asp165, Gly178, and Asn274 each bind substrate. Asp298 is a Fe cation binding site.

The protein belongs to the KAE1 / TsaD family. It depends on Fe(2+) as a cofactor.

Its subcellular location is the cytoplasm. The catalysed reaction is L-threonylcarbamoyladenylate + adenosine(37) in tRNA = N(6)-L-threonylcarbamoyladenosine(37) in tRNA + AMP + H(+). Its function is as follows. Required for the formation of a threonylcarbamoyl group on adenosine at position 37 (t(6)A37) in tRNAs that read codons beginning with adenine. Is involved in the transfer of the threonylcarbamoyl moiety of threonylcarbamoyl-AMP (TC-AMP) to the N6 group of A37, together with TsaE and TsaB. TsaD likely plays a direct catalytic role in this reaction. This is tRNA N6-adenosine threonylcarbamoyltransferase from Borrelia recurrentis (strain A1).